The chain runs to 530 residues: Lanosterol 14-alpha demethylase CYP51 (530 aa).

Residues 1 to 20 are Lumenal-facing; that stretch reads MSATKSIVGEALEYVNIGLS. A helical membrane pass occupies residues 21–41; that stretch reads HFLALPLAQRISLIIIIPFIY. The Cytoplasmic segment spans residues 42-530; it reads NIVWQLLYSL…WEKRNPEQKI (489 aa). Lys116 is covalently cross-linked (Glycyl lysine isopeptide (Lys-Gly) (interchain with G-Cter in ubiquitin)). Tyr126 serves as a coordination point for lanosterol. Gly314 serves as a coordination point for itraconazole. Residues Lys353 and Lys454 each participate in a glycyl lysine isopeptide (Lys-Gly) (interchain with G-Cter in ubiquitin) cross-link. Residue Ser458 is modified to Phosphoserine. Residue Cys470 participates in heme binding.

The protein belongs to the cytochrome P450 family. As to quaternary structure, interacts with ERG28. Heme serves as cofactor.

The protein resides in the endoplasmic reticulum membrane. The catalysed reaction is a 14alpha-methyl steroid + 3 reduced [NADPH--hemoprotein reductase] + 3 O2 = a Delta(14) steroid + formate + 3 oxidized [NADPH--hemoprotein reductase] + 4 H2O + 4 H(+). The enzyme catalyses a 14alpha-methyl steroid + reduced [NADPH--hemoprotein reductase] + O2 = a 14alpha-hydroxymethyl steroid + oxidized [NADPH--hemoprotein reductase] + H2O + H(+). It carries out the reaction a 14alpha-hydroxymethyl steroid + reduced [NADPH--hemoprotein reductase] + O2 = a 14alpha-formyl steroid + oxidized [NADPH--hemoprotein reductase] + 2 H2O + H(+). It catalyses the reaction a 14alpha-formyl steroid + reduced [NADPH--hemoprotein reductase] + O2 = a Delta(14) steroid + formate + oxidized [NADPH--hemoprotein reductase] + H2O + 2 H(+). The catalysed reaction is lanosterol + 3 reduced [NADPH--hemoprotein reductase] + 3 O2 = 4,4-dimethyl-5alpha-cholesta-8,14,24-trien-3beta-ol + formate + 3 oxidized [NADPH--hemoprotein reductase] + 4 H2O + 4 H(+). The enzyme catalyses lanosterol + reduced [NADPH--hemoprotein reductase] + O2 = 32-hydroxylanosterol + oxidized [NADPH--hemoprotein reductase] + H2O + H(+). It carries out the reaction 32-hydroxylanosterol + reduced [NADPH--hemoprotein reductase] + O2 = 32-oxolanosterol + oxidized [NADPH--hemoprotein reductase] + 2 H2O + H(+). It catalyses the reaction 32-oxolanosterol + reduced [NADPH--hemoprotein reductase] + O2 = 4,4-dimethyl-5alpha-cholesta-8,14,24-trien-3beta-ol + formate + oxidized [NADPH--hemoprotein reductase] + H2O + 2 H(+). It functions in the pathway steroid biosynthesis; zymosterol biosynthesis; zymosterol from lanosterol: step 1/6. In terms of biological role, sterol 14alpha-demethylase that plays a critical role in the third module of ergosterol biosynthesis pathway, being ergosterol the major sterol component in fungal membranes that participates in a variety of functions. The third module or late pathway involves the ergosterol synthesis itself through consecutive reactions that mainly occur in the endoplasmic reticulum (ER) membrane. Starting from lanosterol (lanosta-8,24-dien-3beta-ol), it catalyzes the three-step oxidative removal of the 14alpha-methyl group (C-32) of the sterol in the form of formate, and converts the sterol to 4,4-dimethyl-5alpha-cholesta-8,14,24-trien-3beta-ol, which is critical for ergosterol biosynthesis. Can demethylate substrates not intrinsic to yeast, such as eburicol (24-methylene-24,25-dihydrolanosterol) at a similar rate to lanosterol, and at a lower rate the 24,25-dihydrolanosterol (DHL) to 4,4-dimethyl-8,14-cholestadien-3beta-ol. The protein is Lanosterol 14-alpha demethylase CYP51 of Saccharomyces cerevisiae (strain ATCC 204508 / S288c) (Baker's yeast).